The sequence spans 917 residues: Isoleucine--tRNA ligase (917 aa).

The short motif at 57–67 is the 'HIGH' region element; sequence PYANGNLHMGH. Glu-554 lines the L-isoleucyl-5'-AMP pocket. Residues 595 to 599 carry the 'KMSKS' region motif; the sequence is KMSKS. Lys-598 lines the ATP pocket. Residues Cys-886, Cys-889, Cys-906, and Cys-909 each coordinate Zn(2+).

It belongs to the class-I aminoacyl-tRNA synthetase family. IleS type 1 subfamily. In terms of assembly, monomer. Zn(2+) serves as cofactor.

It is found in the cytoplasm. The catalysed reaction is tRNA(Ile) + L-isoleucine + ATP = L-isoleucyl-tRNA(Ile) + AMP + diphosphate. Catalyzes the attachment of isoleucine to tRNA(Ile). As IleRS can inadvertently accommodate and process structurally similar amino acids such as valine, to avoid such errors it has two additional distinct tRNA(Ile)-dependent editing activities. One activity is designated as 'pretransfer' editing and involves the hydrolysis of activated Val-AMP. The other activity is designated 'posttransfer' editing and involves deacylation of mischarged Val-tRNA(Ile). The chain is Isoleucine--tRNA ligase (ileS) from Staphylococcus aureus (strain MSSA476).